The sequence spans 86 residues: MERNQRKTLYGRVVSDKMDKTITVVVETKRNHPVYGKRINYSKKYKAHDENNVAKEGDIVRIMETRPLSATKRFRLVEVVEEAVII.

The protein belongs to the universal ribosomal protein uS17 family. As to quaternary structure, part of the 30S ribosomal subunit.

In terms of biological role, one of the primary rRNA binding proteins, it binds specifically to the 5'-end of 16S ribosomal RNA. This Streptococcus pyogenes serotype M6 (strain ATCC BAA-946 / MGAS10394) protein is Small ribosomal subunit protein uS17.